A 248-amino-acid chain; its full sequence is PF03932 family protein CutC (248 aa).

It belongs to the CutC family. Homodimer.

It is found in the cytoplasm. In Escherichia coli O81 (strain ED1a), this protein is PF03932 family protein CutC.